The chain runs to 397 residues: F-box protein At3g49450 (397 aa).

An F-box domain is found at 26 to 75; it reads GENSGTLPTDLMVEILSRVPAKSAARFRCVSNDWNSLLRSPYLTNLFLKR.

This is F-box protein At3g49450 from Arabidopsis thaliana (Mouse-ear cress).